Here is a 434-residue protein sequence, read N- to C-terminus: Gamma-glutamyl phosphate reductase (434 aa).

This sequence belongs to the gamma-glutamyl phosphate reductase family.

It is found in the cytoplasm. The catalysed reaction is L-glutamate 5-semialdehyde + phosphate + NADP(+) = L-glutamyl 5-phosphate + NADPH + H(+). It functions in the pathway amino-acid biosynthesis; L-proline biosynthesis; L-glutamate 5-semialdehyde from L-glutamate: step 2/2. Its function is as follows. Catalyzes the NADPH-dependent reduction of L-glutamate 5-phosphate into L-glutamate 5-semialdehyde and phosphate. The product spontaneously undergoes cyclization to form 1-pyrroline-5-carboxylate. The chain is Gamma-glutamyl phosphate reductase from Rhodopirellula baltica (strain DSM 10527 / NCIMB 13988 / SH1).